The following is a 90-amino-acid chain: Chromosomal protein MC1c (90 aa).

In terms of biological role, protects DNA against thermal denaturation and modulates transcription. The chain is Chromosomal protein MC1c from Methanothrix soehngenii (Methanosaeta concilii).